Here is a 28-residue protein sequence, read N- to C-terminus: Potassium channel toxin alpha-KTx 9.5 (28 aa).

Cystine bridges form between C3/C19, C6/C24, and C10/C26. V28 carries the post-translational modification Valine amide.

Expressed by the venom gland.

The protein localises to the secreted. Its function is as follows. Blocks voltage-gated potassium channels Kv1.1/KCNA1 (IC(50)=145 nM), Kv1.2/KCNA2 (IC(50)=2.5 nM), and Kv1.3/KCNA3 (IC(50)=15). Also inhibits calcium-activated potassium channels (KCa/KCNN). In Buthus occitanus tunetanus (Common European scorpion), this protein is Potassium channel toxin alpha-KTx 9.5.